Reading from the N-terminus, the 152-residue chain is Globin CTT-E/E' (152 aa).

Positions 1-15 are cleaved as a signal peptide; that stretch reads MKFIILALCVAAASA. The region spanning 16-152 is the Globin domain; sequence LSGDQIGLVQ…AFFGAVFAKM (137 aa). Positions 73 and 102 each coordinate heme b.

This sequence belongs to the globin family.

The chain is Globin CTT-E/E' (CTT-E) from Chironomus thummi thummi (Midge).